Consider the following 249-residue polypeptide: Very-long-chain (3R)-3-hydroxyacyl-CoA dehydratase 1 (249 aa).

A disordered region spans residues M1 to A22. The Cytoplasmic segment spans residues M1–W36. Residues L37–V56 traverse the membrane as a helical segment. Over R57–T75 the chain is Lumenal. A helical transmembrane segment spans residues L76–I92. The Cytoplasmic portion of the chain corresponds to G93 to A102. A helical membrane pass occupies residues G103–I120. Topologically, residues K121 to E126 are lumenal. A helical membrane pass occupies residues E127–I141. At T142–Y164 the chain is on the cytoplasmic side. Residues N165–I182 form a helical membrane-spanning segment. Active-site residues include Y171 and E178. Residues Y183–F212 lie on the Lumenal side of the membrane. An N-linked (GlcNAc...) asparagine glycan is attached at N204. The helical transmembrane segment at L213–H230 threads the bilayer. The Cytoplasmic segment spans residues M231–D249.

The protein belongs to the very long-chain fatty acids dehydratase HACD family. In terms of assembly, may interact with enzymes of the ELO family (including ELOVL1); with those enzymes that mediate condensation, the first of the four steps of the reaction cycle responsible for fatty acids elongation, may be part of a larger fatty acids elongase complex. Interacts with TECR. Skeletal muscle.

It localises to the endoplasmic reticulum membrane. It carries out the reaction a very-long-chain (3R)-3-hydroxyacyl-CoA = a very-long-chain (2E)-enoyl-CoA + H2O. The catalysed reaction is (3R)-hydroxyhexadecanoyl-CoA = (2E)-hexadecenoyl-CoA + H2O. The enzyme catalyses (3R)-hydroxyoctadecanoyl-CoA = (2E)-octadecenoyl-CoA + H2O. It catalyses the reaction (3R)-hydroxyeicosanoyl-CoA = (2E)-eicosenoyl-CoA + H2O. It carries out the reaction (3R)-hydroxydocosanoyl-CoA = (2E)-docosenoyl-CoA + H2O. The catalysed reaction is (3R)-hydroxytetracosanoyl-CoA = (2E)-tetracosenoyl-CoA + H2O. The enzyme catalyses (3R)-hydroxyhexacosanoyl-CoA = (2E)-hexacosenoyl-CoA + H2O. The protein operates within lipid metabolism; fatty acid biosynthesis. Catalyzes the third of the four reactions of the long-chain fatty acids elongation cycle. This endoplasmic reticulum-bound enzymatic process, allows the addition of two carbons to the chain of long- and very long-chain fatty acids/VLCFAs per cycle. This enzyme catalyzes the dehydration of the 3-hydroxyacyl-CoA intermediate into trans-2,3-enoyl-CoA, within each cycle of fatty acid elongation. Thereby, it participates in the production of VLCFAs of different chain lengths that are involved in multiple biological processes as precursors of membrane lipids and lipid mediators. The polypeptide is Very-long-chain (3R)-3-hydroxyacyl-CoA dehydratase 1 (HACD1) (Canis lupus familiaris (Dog)).